A 96-amino-acid chain; its full sequence is Large ribosomal subunit protein uL23 (96 aa).

It belongs to the universal ribosomal protein uL23 family. Part of the 50S ribosomal subunit. Contacts protein L29, and trigger factor when it is bound to the ribosome.

In terms of biological role, one of the early assembly proteins it binds 23S rRNA. One of the proteins that surrounds the polypeptide exit tunnel on the outside of the ribosome. Forms the main docking site for trigger factor binding to the ribosome. In Bacillus cereus (strain ATCC 10987 / NRS 248), this protein is Large ribosomal subunit protein uL23.